A 196-amino-acid polypeptide reads, in one-letter code: Large ribosomal subunit protein eL15 (196 aa).

A compositionally biased stretch (basic residues) spans arginine 162 to arginine 172. Positions arginine 162–serine 196 are disordered.

The protein belongs to the eukaryotic ribosomal protein eL15 family.

In Halobacterium salinarum (strain ATCC 29341 / DSM 671 / R1), this protein is Large ribosomal subunit protein eL15.